We begin with the raw amino-acid sequence, 359 residues long: MYTRTKTKKVFVGDVQIGGQNKIVLQSMTIAKTKHVKKSLKEINDLVKEGADLVRIAVFDDADKRAIRKVVDQSPCPIIADIHFNPDYAIAAIKAGCKKIRLNPGNIKSKEKLREICLLANQYNIPIRVGVNSGSIPYDLMREYGVTSTAMIIAAQRYVRMLKRFGFDNIVISLKTSSALLSMQAYELGAKKFSYPLHLGITEAGTLINGTIKSVAGLTPLLLKGIGDTIRISLSTNPVDEIKVAKKMLNSLGLYENLVDVVACPTCGRLNFDLFKVTKEIEEFVKDLHFPLKVSILGCSVNGPGEAKEADIGIAGGKQEGIIFKKGVVVKSVKQEYLVDELKQMILEEYELFKKKNGK.

Positions 264, 267, 299, and 306 each coordinate [4Fe-4S] cluster.

Belongs to the IspG family. [4Fe-4S] cluster serves as cofactor.

The enzyme catalyses (2E)-4-hydroxy-3-methylbut-2-enyl diphosphate + oxidized [flavodoxin] + H2O + 2 H(+) = 2-C-methyl-D-erythritol 2,4-cyclic diphosphate + reduced [flavodoxin]. It functions in the pathway isoprenoid biosynthesis; isopentenyl diphosphate biosynthesis via DXP pathway; isopentenyl diphosphate from 1-deoxy-D-xylulose 5-phosphate: step 5/6. In terms of biological role, converts 2C-methyl-D-erythritol 2,4-cyclodiphosphate (ME-2,4cPP) into 1-hydroxy-2-methyl-2-(E)-butenyl 4-diphosphate. The chain is 4-hydroxy-3-methylbut-2-en-1-yl diphosphate synthase (flavodoxin) from Mycoplasmoides gallisepticum (strain R(low / passage 15 / clone 2)) (Mycoplasma gallisepticum).